Here is a 340-residue protein sequence, read N- to C-terminus: Ferrochelatase (340 aa).

The Fe cation site is built by histidine 189 and glutamate 292.

Belongs to the ferrochelatase family.

It localises to the cytoplasm. The enzyme catalyses heme b + 2 H(+) = protoporphyrin IX + Fe(2+). It functions in the pathway porphyrin-containing compound metabolism; protoheme biosynthesis; protoheme from protoporphyrin-IX: step 1/1. Its function is as follows. Catalyzes the ferrous insertion into protoporphyrin IX. The protein is Ferrochelatase of Pseudomonas fluorescens biotype C.